A 457-amino-acid polypeptide reads, in one-letter code: Transcription termination factor Rho (457 aa).

The disordered stretch occupies residues Met1–Asp23. The region spanning Leu77–Asp152 is the Rho RNA-BD domain. ATP is bound by residues Gly200–Ala205, Arg212–Val217, and Arg243.

It belongs to the Rho family. Homohexamer. The homohexamer assembles into an open ring structure.

Its function is as follows. Facilitates transcription termination by a mechanism that involves Rho binding to the nascent RNA, activation of Rho's RNA-dependent ATPase activity, and release of the mRNA from the DNA template. The chain is Transcription termination factor Rho from Rickettsia prowazekii (strain Madrid E).